Consider the following 35-residue polypeptide: Pheromone-binding protein (35 aa).

The protein belongs to the PBP/GOBP family. Antenna.

In terms of biological role, this major soluble protein in olfactory sensilla of male moths might serve to solubilize the extremely hydrophobic pheromone molecules and to transport pheromone through the aqueous lymph to receptors located on olfactory cilia. The protein is Pheromone-binding protein of Hyalophora cecropia (Cecropia moth).